A 217-amino-acid polypeptide reads, in one-letter code: Adenylate kinase (217 aa).

An ATP-binding site is contributed by 10–15; it reads GAGKGT. Residues 30 to 59 are NMP; sequence STGDMLRAAVKAGSPLGVKVKDIMASGQLV. AMP-binding positions include Thr31, Arg36, 57–59, 85–88, and Gln92; these read QLV and GFPR. The interval 122 to 159 is LID; it reads GRRVHEASGRIYHVTHNPPKTEGVDDITGEPLVQRDDD. Residues Arg123 and 132 to 133 contribute to the ATP site; that span reads IY. AMP contacts are provided by Arg156 and Arg167. Gly202 is an ATP binding site.

It belongs to the adenylate kinase family. In terms of assembly, monomer.

It localises to the cytoplasm. It catalyses the reaction AMP + ATP = 2 ADP. Its pathway is purine metabolism; AMP biosynthesis via salvage pathway; AMP from ADP: step 1/1. Its function is as follows. Catalyzes the reversible transfer of the terminal phosphate group between ATP and AMP. Plays an important role in cellular energy homeostasis and in adenine nucleotide metabolism. The protein is Adenylate kinase of Teredinibacter turnerae (strain ATCC 39867 / T7901).